The following is a 217-amino-acid chain: Probable transaldolase (217 aa).

The active-site Schiff-base intermediate with substrate is Lys-83.

This sequence belongs to the transaldolase family. Type 3B subfamily.

It localises to the cytoplasm. It carries out the reaction D-sedoheptulose 7-phosphate + D-glyceraldehyde 3-phosphate = D-erythrose 4-phosphate + beta-D-fructose 6-phosphate. It functions in the pathway carbohydrate degradation; pentose phosphate pathway; D-glyceraldehyde 3-phosphate and beta-D-fructose 6-phosphate from D-ribose 5-phosphate and D-xylulose 5-phosphate (non-oxidative stage): step 2/3. Its function is as follows. Transaldolase is important for the balance of metabolites in the pentose-phosphate pathway. In Bartonella quintana (strain Toulouse) (Rochalimaea quintana), this protein is Probable transaldolase.